We begin with the raw amino-acid sequence, 428 residues long: GTPase Obg (428 aa).

Residues 1-158 (MFVDQTKIDV…RTLRLELKVL (158 aa)) form the Obg domain. The 170-residue stretch at 159–328 (ADVGLVGFPS…LMGKTADLVE (170 aa)) folds into the OBG-type G domain. GTP contacts are provided by residues 165-172 (GFPSVGKS), 190-194 (FTTLT), 212-215 (DLPG), 282-285 (TQMD), and 309-311 (SSV). 2 residues coordinate Mg(2+): S172 and T192. Residues 350–428 (YKKPEDDGFK…IADFTFEFVD (79 aa)) enclose the OCT domain.

The protein belongs to the TRAFAC class OBG-HflX-like GTPase superfamily. OBG GTPase family. As to quaternary structure, monomer. Mg(2+) is required as a cofactor.

It is found in the cytoplasm. Functionally, an essential GTPase which binds GTP, GDP and possibly (p)ppGpp with moderate affinity, with high nucleotide exchange rates and a fairly low GTP hydrolysis rate. Plays a role in control of the cell cycle, stress response, ribosome biogenesis and in those bacteria that undergo differentiation, in morphogenesis control. This chain is GTPase Obg, found in Lactobacillus gasseri (strain ATCC 33323 / DSM 20243 / BCRC 14619 / CIP 102991 / JCM 1131 / KCTC 3163 / NCIMB 11718 / NCTC 13722 / AM63).